A 320-amino-acid polypeptide reads, in one-letter code: tRNA pseudouridine synthase B (320 aa).

Asp49 serves as the catalytic Nucleophile.

It belongs to the pseudouridine synthase TruB family. Type 1 subfamily.

It catalyses the reaction uridine(55) in tRNA = pseudouridine(55) in tRNA. In terms of biological role, responsible for synthesis of pseudouridine from uracil-55 in the psi GC loop of transfer RNAs. This chain is tRNA pseudouridine synthase B, found in Bartonella bacilliformis (strain ATCC 35685 / KC583 / Herrer 020/F12,63).